Reading from the N-terminus, the 149-residue chain is MRCPFCATDDTKVVDSRLTADGYQIRRRRECPVCKERFTTFESAELLIPHIVKNNGSREPFDERKLRTSLSRALEKRPVSTDDVEQAIHRIVLQLQATGEREVASKFVGDLVLGELKSLDKVAYIRFASVYLSFDDVEEFSKEIERLRN.

A zinc finger lies at 3–34 (CPFCATDDTKVVDSRLTADGYQIRRRRECPVC). Residues 49-139 (PHIVKNNGSR…VYLSFDDVEE (91 aa)) form the ATP-cone domain.

Belongs to the NrdR family. The cofactor is Zn(2+).

Its function is as follows. Negatively regulates transcription of bacterial ribonucleotide reductase nrd genes and operons by binding to NrdR-boxes. In Glaesserella parasuis serovar 5 (strain SH0165) (Haemophilus parasuis), this protein is Transcriptional repressor NrdR.